The following is a 113-amino-acid chain: Propane 2-monooxygenase, effector component (113 aa).

The protein belongs to the TmoD/XamoD family. The propane 2-monooxygenase multicomponent enzyme system is composed of an electron transfer component and a monooxygenase component interacting with the effector protein PrmD. The electron transfer component is composed of a reductase (PrmB), and the monooxygenase component is formed by a large subunit (PrmA) and a small subunit (PrmC).

Functionally, effector component of the propane 2-monooxygenase multicomponent enzyme system which is involved in the degradation of propane via the O2-dependent hydroxylation of propane. The protein is Propane 2-monooxygenase, effector component of Rhodococcus jostii (strain RHA1).